The chain runs to 341 residues: N-acetyl-gamma-glutamyl-phosphate reductase (341 aa).

Cys148 is a catalytic residue.

The protein belongs to the NAGSA dehydrogenase family. Type 1 subfamily.

The protein resides in the cytoplasm. The enzyme catalyses N-acetyl-L-glutamate 5-semialdehyde + phosphate + NADP(+) = N-acetyl-L-glutamyl 5-phosphate + NADPH + H(+). It functions in the pathway amino-acid biosynthesis; L-arginine biosynthesis; N(2)-acetyl-L-ornithine from L-glutamate: step 3/4. Catalyzes the NADPH-dependent reduction of N-acetyl-5-glutamyl phosphate to yield N-acetyl-L-glutamate 5-semialdehyde. The sequence is that of N-acetyl-gamma-glutamyl-phosphate reductase from Pseudothermotoga lettingae (strain ATCC BAA-301 / DSM 14385 / NBRC 107922 / TMO) (Thermotoga lettingae).